Reading from the N-terminus, the 75-residue chain is uncharacterized protein (75 aa).

The protein resides in the plastid. It is found in the chloroplast. This is an uncharacterized protein from Calycanthus floridus var. glaucus (Eastern sweetshrub).